A 501-amino-acid chain; its full sequence is Aldehyde dehydrogenase mpl4 (501 aa).

231–236 lines the NAD(+) pocket; that stretch reads GSTASG. Active-site residues include glutamate 253 and cysteine 287.

The protein belongs to the aldehyde dehydrogenase family.

The enzyme catalyses an aldehyde + NAD(+) + H2O = a carboxylate + NADH + 2 H(+). It functions in the pathway mycotoxin biosynthesis. Aldehyde dehydrogenase; part of the gene cluster that mediates the biosynthesis of the mycotoxin citrinin, a hepato-nephrotoxic compound to humans due to inhibition of respiration complex III. The pathway begins with the synthesis of a keto-aldehyde intermediate by the citrinin PKS (pksCT) from successive condensations of 4 malonyl-CoA units, presumably with a simple acetyl-CoA starter unit. Release of the keto-aldehyde intermediate is consistent with the presence of the C-terminal reductive release domain. Mp11 collaborates with pksCT by catalyzing the hydrolysis of ACP-bound acyl intermediates to free the ACP from stalled intermediates. Mpl2 then catalyzes the oxidation of the C-12 methyl of the ketone intermediate to an alcohol intermediate which is further oxidized by the oxidoreductase mpl7 to produce a bisaldehyde intermediate. The fourth catalytic step is catalyzed by the mpl4 aldehyde dehydrogenase. The final transformation is the reduction of C-3 by mpl6 to provide the chemically stable citrinin nucleus. The protein is Aldehyde dehydrogenase mpl4 of Monascus purpureus (Red mold).